Consider the following 61-residue polypeptide: Opistoporin-4 (61 aa).

Residues 45 to 61 (EAGQMPFDEFMDILHYY) constitute a propeptide that is removed on maturation.

It belongs to the non-disulfide-bridged peptide (NDBP) superfamily. Long chain multifunctional peptide (group 2) family. As to expression, expressed by the venom gland.

It is found in the secreted. Its subcellular location is the target cell membrane. Its function is as follows. At high concentrations, acts as a pore former in cellular membranes and causes the leakage of the cells. At submicromolar concentrations, degranulates granulocytes and has a weak hemolytic activity against human erythrocytes. Also strongly inhibits the production of superoxide anions. Has a strong antibacterial activity against Gram-negative bacteria but is less active against Gram-positive bacteria. Also has antifungal activity. The sequence is that of Opistoporin-4 from Opistophthalmus carinatus (African yellow leg scorpion).